A 480-amino-acid polypeptide reads, in one-letter code: Iroquois-class homeodomain protein IRX-1 (480 aa).

Positions 127-189 (DPGRPKNATR…NARRRLKKEN (63 aa)) form a DNA-binding region, homeobox; TALE-type. 3 disordered regions span residues 190–285 (KVTW…LGLV), 318–354 (SLAETATSPDGAPKASPPPPSSHASAHGPPSGSPLQH), and 401–480 (PHGP…LPSA). The span at 210–232 (TEGDPEKAEDDEEIDLESIDIDQ) shows a compositional bias: acidic residues. At Ser241 the chain carries Phosphoserine. The span at 254–263 (ARVAPPASAR) shows a compositional bias: low complexity. Residues 264-280 (DQSSPLSAAETLKSQDS) show a composition bias toward polar residues. Residues 339 to 351 (SHASAHGPPSGSP) are compositionally biased toward low complexity.

This sequence belongs to the TALE/IRO homeobox family. As to expression, expressed in specific and overlapping patterns with Irx1 and Irx2 in the developing and adult metanephric kidney. In the adult metanephros, renal expression is found in the loop of Henle in the S3 proximal tubule segment and in the thick ascending limb (TAL) of the distal tubule.

The protein localises to the nucleus. In Mus musculus (Mouse), this protein is Iroquois-class homeodomain protein IRX-1 (Irx1).